Consider the following 93-residue polypeptide: Late embryogenesis abundant protein B19.1A (93 aa).

Positions 1–93 (MASGQQERSQ…IDESKFKTKS (93 aa)) are disordered. Basic and acidic residues-rich tracts occupy residues 9–19 (SQLDRKAREGE) and 73–93 (GGERAAREGIDIDESKFKTKS).

The protein belongs to the small hydrophilic plant seed protein family. Embryos and young seedlings.

Lea proteins are late embryonic proteins abundant in higher plant seed embryos. It may have a role in desiccation tolerance by acting as an osmoprotective protein or as a desiccation-damage repair protein. The chain is Late embryogenesis abundant protein B19.1A (B19.1A) from Hordeum vulgare (Barley).